Reading from the N-terminus, the 197-residue chain is UPF0200 protein MJ1399 (197 aa).

8 to 15 contacts ATP; that stretch reads GMPGAGKS.

It belongs to the UPF0200 family.

The protein is UPF0200 protein MJ1399 of Methanocaldococcus jannaschii (strain ATCC 43067 / DSM 2661 / JAL-1 / JCM 10045 / NBRC 100440) (Methanococcus jannaschii).